The following is a 534-amino-acid chain: Chaperonin GroEL 3 (534 aa).

Residues 31 to 34, G416, 479 to 481, and D495 contribute to the ATP site; these read TLGP and NAL.

This sequence belongs to the chaperonin (HSP60) family. In terms of assembly, forms a cylinder of 14 subunits composed of two heptameric rings stacked back-to-back. Interacts with the co-chaperonin GroES.

The protein resides in the cytoplasm. It catalyses the reaction ATP + H2O + a folded polypeptide = ADP + phosphate + an unfolded polypeptide.. Its function is as follows. Together with its co-chaperonin GroES, plays an essential role in assisting protein folding. The GroEL-GroES system forms a nano-cage that allows encapsulation of the non-native substrate proteins and provides a physical environment optimized to promote and accelerate protein folding. This Protochlamydia amoebophila (strain UWE25) protein is Chaperonin GroEL 3.